The sequence spans 227 residues: Cytochrome c oxidase subunit 2 (227 aa).

At 1-14 (MAHATQVGLQDATS) the chain is on the mitochondrial intermembrane side. A helical membrane pass occupies residues 15–45 (PIMEELISFHDHALMIIFLISFLVLYALFLT). Residues 46 to 59 (LTTKLTNTNITDAQ) are Mitochondrial matrix-facing. The helical transmembrane segment at 60-87 (EMETVWTILPAIILVLIALPSLRILYLT) threads the bilayer. At 88–227 (DEINDPSFTI…IFEMGPVFTL (140 aa)) the chain is on the mitochondrial intermembrane side. Residues H161, C196, E198, C200, H204, and M207 each coordinate Cu cation. E198 provides a ligand contact to Mg(2+).

It belongs to the cytochrome c oxidase subunit 2 family. In terms of assembly, component of the cytochrome c oxidase (complex IV, CIV), a multisubunit enzyme composed of 14 subunits. The complex is composed of a catalytic core of 3 subunits MT-CO1, MT-CO2 and MT-CO3, encoded in the mitochondrial DNA, and 11 supernumerary subunits COX4I, COX5A, COX5B, COX6A, COX6B, COX6C, COX7A, COX7B, COX7C, COX8 and NDUFA4, which are encoded in the nuclear genome. The complex exists as a monomer or a dimer and forms supercomplexes (SCs) in the inner mitochondrial membrane with NADH-ubiquinone oxidoreductase (complex I, CI) and ubiquinol-cytochrome c oxidoreductase (cytochrome b-c1 complex, complex III, CIII), resulting in different assemblies (supercomplex SCI(1)III(2)IV(1) and megacomplex MCI(2)III(2)IV(2)). Found in a complex with TMEM177, COA6, COX18, COX20, SCO1 and SCO2. Interacts with TMEM177 in a COX20-dependent manner. Interacts with COX20. Interacts with COX16. The cofactor is Cu cation.

Its subcellular location is the mitochondrion inner membrane. The enzyme catalyses 4 Fe(II)-[cytochrome c] + O2 + 8 H(+)(in) = 4 Fe(III)-[cytochrome c] + 2 H2O + 4 H(+)(out). Functionally, component of the cytochrome c oxidase, the last enzyme in the mitochondrial electron transport chain which drives oxidative phosphorylation. The respiratory chain contains 3 multisubunit complexes succinate dehydrogenase (complex II, CII), ubiquinol-cytochrome c oxidoreductase (cytochrome b-c1 complex, complex III, CIII) and cytochrome c oxidase (complex IV, CIV), that cooperate to transfer electrons derived from NADH and succinate to molecular oxygen, creating an electrochemical gradient over the inner membrane that drives transmembrane transport and the ATP synthase. Cytochrome c oxidase is the component of the respiratory chain that catalyzes the reduction of oxygen to water. Electrons originating from reduced cytochrome c in the intermembrane space (IMS) are transferred via the dinuclear copper A center (CU(A)) of subunit 2 and heme A of subunit 1 to the active site in subunit 1, a binuclear center (BNC) formed by heme A3 and copper B (CU(B)). The BNC reduces molecular oxygen to 2 water molecules using 4 electrons from cytochrome c in the IMS and 4 protons from the mitochondrial matrix. This Hylobates lar (Lar gibbon) protein is Cytochrome c oxidase subunit 2 (MT-CO2).